Here is a 92-residue protein sequence, read N- to C-terminus: Neuropeptide F (92 aa).

Positions 1–27 are cleaved as a signal peptide; sequence MSQSRPLALLVVAALVAAAVLVAAAEA. Positions 28-51 are excised as a propeptide; sequence QQADGNKLEGLADALKYLQELDRY. At Phe-60 the chain carries Phenylalanine amide. The propeptide occupies 64–92; it reads AELRPDVVDDVIPEEMSADKFWRRFARRR.

It belongs to the NPY family. Widely expressed in the nervous system. Expressed in corpora cardiaca, hypocerebral ganglion, frontal ganglion, protocerebrum, antennal lobe, tritocerebrum and thoracic ganglia. Not detected in corpora allata, pars intercerebralis, circumesophageal connectives, subesophageal ganglion, abdominal ganglion and abdominal perisympathetic organs.

It is found in the secreted. Its function is as follows. Accelerates ovarian maturation in females. This chain is Neuropeptide F, found in Locusta migratoria (Migratory locust).